We begin with the raw amino-acid sequence, 482 residues long: Hydroxymethylglutaryl-CoA synthase A (482 aa).

Glu85 (proton donor/acceptor) is an active-site residue. Residue Cys119 is the Acyl-thioester intermediate of the active site. Cys119, Thr161, Ser211, His249, Lys258, Asn325, and Ser358 together coordinate (3S)-3-hydroxy-3-methylglutaryl-CoA. His249 serves as the catalytic Proton donor/acceptor.

Belongs to the thiolase-like superfamily. HMG-CoA synthase family.

It carries out the reaction acetoacetyl-CoA + acetyl-CoA + H2O = (3S)-3-hydroxy-3-methylglutaryl-CoA + CoA + H(+). The protein operates within metabolic intermediate biosynthesis; (R)-mevalonate biosynthesis; (R)-mevalonate from acetyl-CoA: step 2/3. Its function is as follows. Condenses acetyl-CoA with acetoacetyl-CoA to form HMG-CoA, which is the substrate for HMG-CoA reductase. The sequence is that of Hydroxymethylglutaryl-CoA synthase A (hgsA) from Dictyostelium discoideum (Social amoeba).